A 37-amino-acid polypeptide reads, in one-letter code: Large ribosomal subunit protein bL36 (37 aa).

The protein belongs to the bacterial ribosomal protein bL36 family.

The sequence is that of Large ribosomal subunit protein bL36 from Mesomycoplasma hyopneumoniae (strain 7448) (Mycoplasma hyopneumoniae).